Consider the following 120-residue polypeptide: Glycine cleavage system H protein (120 aa).

Residues 19-101 (DGTVGISDFA…YTDGWLFRLD (83 aa)) form the Lipoyl-binding domain. Residue Lys60 is modified to N6-lipoyllysine.

This sequence belongs to the GcvH family. The glycine cleavage system is composed of four proteins: P, T, L and H. It depends on (R)-lipoate as a cofactor.

In terms of biological role, the glycine cleavage system catalyzes the degradation of glycine. The H protein shuttles the methylamine group of glycine from the P protein to the T protein. The sequence is that of Glycine cleavage system H protein from Deinococcus geothermalis (strain DSM 11300 / CIP 105573 / AG-3a).